The chain runs to 59 residues: Large ribosomal subunit protein uL30 (59 aa).

Belongs to the universal ribosomal protein uL30 family. Part of the 50S ribosomal subunit.

This chain is Large ribosomal subunit protein uL30, found in Staphylococcus haemolyticus (strain JCSC1435).